The sequence spans 382 residues: MAEQANQPTVLQKFGGQFHLGSSFSEGVRARNICPSVSSYDRRFTTRSYMTQGLVNGGINVPMMSSSPIFANAPAEKGGKNFMIDFLMGGVSAAVSKTAAAPIERVKLLIQNQDEMIKAGRLSEPYKGIGDCFGRTIKDEGFASLWRGNTANVIRYFPTQALNFAFKDYFKRLFNFKKDKDGYWKWFGGNLASGGAAGASSLFFVYSLDYARTRLANDAKAAKGGGERQFNGLVDVYRKTLKSDGIAGLYRGFNISCVGIIVYRGLYFGMYDSLKPVVLTGSLQDNFFASFALGWLITNGAGLASYPIDTVRRRMMMTSGEAVKYKSSMDAFSQILKNEGAKSLFKGAGANILRAIAGAGVLSGYDQLQILFFGKKYGSGGA.

A mitochondrion-targeting transit peptide spans 1-71 (MAEQANQPTV…PMMSSSPIFA (71 aa)). Solcar repeat units lie at residues 80–173 (KNFM…FKRL), 185–277 (KWFG…LKPV), and 285–371 (DNFF…LQIL). 5 consecutive transmembrane segments (helical) span residues 82-109 (FMIDFLMGGVSAAVSKTAAAPIERVKLL), 150-174 (TANVIRYFPTQALNFAFKDYFKRLF), 183-203 (YWKWFGGNLASGGAAGASSLF), 253-274 (FNISCVGIIVYRGLYFGMYDSL), and 288-308 (FASFALGWLITNGAGLASYPI). 2 residues coordinate ADP: arginine 155 and lysine 167. An ADP-binding site is contributed by arginine 312. Residues 312–317 (RRRMMM) are important for transport activity. Positions 312-317 (RRRMMM) match the Nucleotide carrier signature motif motif. Residues 348-368 (AGANILRAIAGAGVLSGYDQL) form a helical membrane-spanning segment.

Belongs to the mitochondrial carrier (TC 2.A.29) family. Monomer.

The protein resides in the mitochondrion inner membrane. The enzyme catalyses ADP(in) + ATP(out) = ADP(out) + ATP(in). With respect to regulation, the matrix-open state (m-state) is inhibited by the membrane-permeable bongkrekic acid (BKA). The cytoplasmic-open state (c-state) is inhibited by the membrane-impermeable toxic inhibitor carboxyatractyloside (CATR). ADP:ATP antiporter that mediates import of ADP into the mitochondrial matrix for ATP synthesis, and export of ATP out to fuel the cell. Cycles between the cytoplasmic-open state (c-state) and the matrix-open state (m-state): operates by the alternating access mechanism with a single substrate-binding site intermittently exposed to either the cytosolic (c-state) or matrix (m-state) side of the inner mitochondrial membrane. This Oryza sativa subsp. japonica (Rice) protein is ADP,ATP carrier protein, mitochondrial.